The following is a 144-amino-acid chain: MSADDLILHYFEDIKEGQSASLAKTISESDIYLFAGLSMDTNPAHVNEDYAQTTVFKTRIAHGMLSAGFISAVLGTRLPGPGAIYVNQSLKFKAPVRIGDTVTATVTVTGLVPEKKFVTFRTTCTVAGKVVIEGEATVMVPARG.

In terms of domain architecture, MaoC-like spans 13–128 (DIKEGQSASL…TFRTTCTVAG (116 aa)).

As to quaternary structure, homotetramer.

The catalysed reaction is a (3R)-3-hydroxyacyl-CoA = a (2E)-enoyl-CoA + H2O. Catalyzes the hydration of trans-2-enoyl-CoAs with a chain-length of 4-6 carbon atoms, forming the corresponding (3R)-3-hydroxyacyl-CoAs, which can then be utilized for the production of polyhydroxyalkanoates (PHA) polymers. Cannot use trans-2,3-octenoyl-CoA as substrate. The protein is (R)-specific enoyl-CoA hydratase of Rhodospirillum rubrum (strain ATCC 11170 / ATH 1.1.1 / DSM 467 / LMG 4362 / NCIMB 8255 / S1).